Here is a 241-residue protein sequence, read N- to C-terminus: RAD9, HUS1, RAD1-interacting nuclear orphan protein 1 (241 aa).

Over residues 1 to 10 (MPPRKKRRQA) the composition is skewed to basic residues. A disordered region spans residues 1–27 (MPPRKKRRQAAQKPQLLFHQQPLEAPK). Residues 56-62 (SWVSPQF) carry the RAD1-binding motif motif. Disordered stretches follow at residues 68-134 (SWFP…PLVP) and 157-204 (IPPD…LVTD). The span at 72 to 87 (GKRKHHHRDHARRSSR) shows a compositional bias: basic residues. The span at 100-110 (ETPQSSASSAT) shows a compositional bias: polar residues. The D-box signature appears at 129–136 (GRPLVPML). Positions 177 to 181 (LRENS) match the KEN box motif. The segment covering 181-193 (SLPSCSLHTSTPK) has biased composition (polar residues).

In terms of assembly, interacts (when phosphorylated by PLK1) with POLQ; promoting POLQ recruitment to DNA damage sites. Interacts with RAD1; interaction is direct and promotes association with the 9-1-1 (RAD9-RAD1-HUS1) complex. Interacts with RAD18. Interacts with TOPBP1. Interacts with UBE2N. In terms of processing, phosphorylated by PLK1, promoting interaction with polymerase theta (POLQ). Post-translationally, ubiquitinated and degraded by the APC/C complex upon mitotic exit.

It is found in the nucleus. It localises to the chromosome. Involved in microhomology-mediated end-joining (MMEJ) DNA repair by promoting recruitment of polymerase theta (POLQ) to DNA damage sites during mitosis. MMEJ is an alternative non-homologous end-joining (NHEJ) machinery that takes place during mitosis to repair double-strand breaks in DNA that originate in S-phase. Accumulates in M-phase; following phosphorylation by PLK1, interacts with POLQ, enabling its recruitment to double-strand breaks for subsequent repair. Also involved in the DNA damage response (DDR) signaling in response to genotoxic stresses such as ionizing radiation (IR) during the S phase. Recruited to sites of DNA damage through interaction with the 9-1-1 cell-cycle checkpoint response complex and TOPBP1 in a ATR-dependent manner. Required for the progression of the G1 to S phase transition. Plays a role in the stimulation of CHEK1 phosphorylation. The polypeptide is RAD9, HUS1, RAD1-interacting nuclear orphan protein 1 (RHNO1) (Bos taurus (Bovine)).